The following is a 532-amino-acid chain: MDSLQLWQRYCDWLYYHPGLEIFVDISRIRFTPPQVEALRPRFAQAFADMQALEAGAIANPDEGRQVGHYWLRAPELAPTPEIRQAIQDSIERVETFAEKIHRGTIPASGGGRFTELLCIGIGGSALGPQFVAEALAPLHPPLNIHFIDNTDPDGFDRVLGRLADQLGQTLVITTSKSGGTPEPRNGLVEVKLAYQKAGIPFSAHAVAITGPGSQLEQQARQEGWLEVFPIFDWVGGRTSETSPVGLLPAALQGIDIRALLAGAATMDEATRLPHLERNPAALLAMAWYIVGQGQGRKDMVVLPYKDRLLLFSRYLQQLVMESLGKSHDLNGNRVEQGIAVYGNKGTTDQHAYVQQLRDGLNNFFVTFIEVLQDREPGIPSPFVEPQVTSGDYLNGLLQGTRQALYENGRDSITVTLPRVDARSVGALIALYERAVGLYASLIQINAYHQPGVEAGKKAASAVLELQRRLLETVQEQQGSLTLPQLAEKLGCPERIETLYWIVRHLHANGRGVLLTGDPARPLELSIQPQPA.

Glutamate 322 (proton donor) is an active-site residue. Active-site residues include histidine 351 and lysine 457.

The protein belongs to the GPI family.

It is found in the cytoplasm. It carries out the reaction alpha-D-glucose 6-phosphate = beta-D-fructose 6-phosphate. Its pathway is carbohydrate biosynthesis; gluconeogenesis. It participates in carbohydrate degradation; glycolysis; D-glyceraldehyde 3-phosphate and glycerone phosphate from D-glucose: step 2/4. Its function is as follows. Catalyzes the reversible isomerization of glucose-6-phosphate to fructose-6-phosphate. In Synechococcus sp. (strain JA-2-3B'a(2-13)) (Cyanobacteria bacterium Yellowstone B-Prime), this protein is Glucose-6-phosphate isomerase.